The primary structure comprises 413 residues: 2,3-bisphosphoglycerate-independent phosphoglycerate mutase (413 aa).

This sequence belongs to the BPG-independent phosphoglycerate mutase family. A-PGAM subfamily.

It catalyses the reaction (2R)-2-phosphoglycerate = (2R)-3-phosphoglycerate. It participates in carbohydrate degradation; glycolysis; pyruvate from D-glyceraldehyde 3-phosphate: step 3/5. Its function is as follows. Catalyzes the interconversion of 2-phosphoglycerate and 3-phosphoglycerate. In Sulfolobus acidocaldarius (strain ATCC 33909 / DSM 639 / JCM 8929 / NBRC 15157 / NCIMB 11770), this protein is 2,3-bisphosphoglycerate-independent phosphoglycerate mutase.